We begin with the raw amino-acid sequence, 332 residues long: Phosphate acyltransferase (332 aa).

It belongs to the PlsX family. As to quaternary structure, homodimer. Probably interacts with PlsY.

The protein resides in the cytoplasm. The enzyme catalyses a fatty acyl-[ACP] + phosphate = an acyl phosphate + holo-[ACP]. It participates in lipid metabolism; phospholipid metabolism. Its function is as follows. Catalyzes the reversible formation of acyl-phosphate (acyl-PO(4)) from acyl-[acyl-carrier-protein] (acyl-ACP). This enzyme utilizes acyl-ACP as fatty acyl donor, but not acyl-CoA. This Sulfurimonas denitrificans (strain ATCC 33889 / DSM 1251) (Thiomicrospira denitrificans (strain ATCC 33889 / DSM 1251)) protein is Phosphate acyltransferase.